We begin with the raw amino-acid sequence, 500 residues long: MKAFKQKQVWFITGSQDLYGPKVLEQVAKNSEQIVYGFNESSAISIEVVYKPTVKSPREIHAVCQAANSDENCVGVILWMHTFSPAKMWIAGLNELSKPFMHLHTQFNAELPWSEINMNYMNTHQSAHGCREFGFIGTRMRKERKVVVGHWQSSDVQAQIDDWCRAAAGWHESQNLRIARFGDNMRQVAVTEGDKVAAQIQFGYEVHAYSLGELNEAIAAIAEGDVTAQLDRYASEYQVGNELFGDEYQLDRLRKEAKIELGLTQFLTQGGFGAFTNCFENLTGMTGLPGLATQRLMANGFGYGGEGDWKTAAMVRIMKVMGQGRAGGTSFMEDYTYNFGATDQVLGAHMLEVCPSIAAAKPRLEVHRHTIGVRCDVPRLLFTGKAGPAINVSTIDLGNRFRIILNELDTVTPPQDLPNLPVASALWEPRPNLAVAAAAWIHAGGAHHSAYSQAITTDQIVDFAEMAGAELVIIDADTKIREFKNELRQNSVYYGLARGL.

Residues Glu-306, Glu-333, His-349, and His-448 each contribute to the Mn(2+) site.

This sequence belongs to the arabinose isomerase family. The cofactor is Mn(2+).

It catalyses the reaction beta-L-arabinopyranose = L-ribulose. It functions in the pathway carbohydrate degradation; L-arabinose degradation via L-ribulose; D-xylulose 5-phosphate from L-arabinose (bacterial route): step 1/3. Functionally, catalyzes the conversion of L-arabinose to L-ribulose. The sequence is that of L-arabinose isomerase from Shewanella sp. (strain MR-4).